The chain runs to 290 residues: Glycine--tRNA ligase alpha subunit (290 aa).

It belongs to the class-II aminoacyl-tRNA synthetase family. Tetramer of two alpha and two beta subunits.

Its subcellular location is the cytoplasm. The catalysed reaction is tRNA(Gly) + glycine + ATP = glycyl-tRNA(Gly) + AMP + diphosphate. The chain is Glycine--tRNA ligase alpha subunit from Synechococcus sp. (strain CC9902).